Consider the following 431-residue polypeptide: Lipid storage droplets surface-binding protein 1 (431 aa).

The interval 397 to 431 is disordered; sequence KVTGSDGGNSNHRSSRRRQDPNHYSATHNNINGVY. The segment covering 418–431 has biased composition (polar residues); the sequence is NHYSATHNNINGVY.

Belongs to the perilipin family.

The protein resides in the cytoplasm. It is found in the lipid droplet. In terms of biological role, required for normal deposition of neutral lipids in the oocyte. The protein is Lipid storage droplets surface-binding protein 1 of Drosophila melanogaster (Fruit fly).